A 653-amino-acid chain; its full sequence is Protein fem-1 homolog A (653 aa).

ANK repeat units follow at residues 2-31 (DLHT…REEL), 40-70 (SGGT…SVEA), 82-111 (EGAP…SVNR), 115-145 (TNST…DLEV), 149-178 (HGHT…QVNR), 182-211 (KGNT…RMER), and 214-243 (YGMT…AGDE). The residue at position 108 (serine 108) is a Phosphoserine. Residues 242-274 (DEQAQPGLARVQPQGARSSPEEPPSGESYESCC) form a disordered region. TPR repeat units lie at residues 282–316 (VEAL…RHQG) and 374–407 (SYYI…QQNN). 2 ANK repeats span residues 518-560 (NGFT…DPDS) and 564-593 (DNNT…HMDA).

It belongs to the fem-1 family. As to quaternary structure, component of a CRL2 E3 ubiquitin-protein ligase complex, also named ECS (Elongin BC-CUL2/5-SOCS-box protein) complex, composed of CUL2, Elongin BC (ELOB and ELOC), RBX1 and substrate-specific adapter FEM1A. Interacts with PTGER4. Interacts with NFKB1; the interaction is direct. Phosphorylated; highly phosphorylated in myoblasts and myotubes. Phosphorylation at Ser-108 promotes PGE2-EP4-mediated inhibition of inflammation. Dephosphorylated by protein phosphatase 2A (PP2A).

The protein localises to the mitochondrion. It localises to the cytoplasm. The protein operates within protein modification; protein ubiquitination. Substrate-recognition component of a Cul2-RING (CRL2) E3 ubiquitin-protein ligase complex of the DesCEND (destruction via C-end degrons) pathway, which recognizes a C-degron located at the extreme C terminus of target proteins, leading to their ubiquitination and degradation. The C-degron recognized by the DesCEND pathway is usually a motif of less than ten residues and can be present in full-length proteins, truncated proteins or proteolytically cleaved forms. The CRL2(FEM1A) complex specifically recognizes proteins with an arginine at the C-terminus: recognizes and binds proteins ending with -Lys/Arg-Xaa-Arg and -Lys/Arg-Xaa-Xaa-Arg C-degrons, such as SIL1 or OR51B2, leading to their ubiquitination and degradation. Involved in PGE2-EP4-mediated inhibition of inflammation of macrophages via interaction with NFKB1 and PTGER4. Promotes inflammation in brain microglia through MAP2K4/MKK4-mediated signaling. The sequence is that of Protein fem-1 homolog A from Bos taurus (Bovine).